We begin with the raw amino-acid sequence, 752 residues long: RNA-directed RNA polymerase (752 aa).

The 120-residue stretch at 442-561 folds into the RdRp catalytic domain; that stretch reads PVAIGLDASR…FLEQSDLATF (120 aa).

It belongs to the tombusviridae RNA polymerase family.

It catalyses the reaction RNA(n) + a ribonucleoside 5'-triphosphate = RNA(n+1) + diphosphate. Its function is as follows. RNA-dependent RNA polymerase that plays an essential role in the virus replication. The sequence is that of RNA-directed RNA polymerase from Oat chlorotic stunt virus (isolate United Kingdom) (OCSV).